A 110-amino-acid chain; its full sequence is Minor capsid protein VP2 (110 aa).

This sequence belongs to the vesivirus VP2 protein family. As to quaternary structure, homooligomer. The portal-like structure consists in 12 copies of VP2. Interacts with capsid protein VP1.

It localises to the virion. It is found in the host cytoplasm. Minor structural protein that forms a portal-like structure at a unique three-fold axis of symmetry, following binding to the host receptor. The channel formed by VP2 may allow the delivery of the viral genome through the host endosomal membrane. In Otariidae (fur seals &amp; sea lions), this protein is Minor capsid protein VP2.